Reading from the N-terminus, the 130-residue chain is MDKIDEIVEKIKLLSLLEASELVKRIEDTFQVNVSNIQPVTGLSSNLTTTQQTPESAEVKEKWDVILENVPADKKIAILKVVRSITGLGLKEAKEFVESVPKIIKQSISQADAEHIKQQIEDAGASVVLK.

Belongs to the bacterial ribosomal protein bL12 family. In terms of assembly, homodimer. Part of the ribosomal stalk of the 50S ribosomal subunit. Forms a multimeric L10(L12)X complex, where L10 forms an elongated spine to which 2 to 4 L12 dimers bind in a sequential fashion. Binds GTP-bound translation factors.

It localises to the plastid. The protein localises to the chloroplast. Forms part of the ribosomal stalk which helps the ribosome interact with GTP-bound translation factors. Is thus essential for accurate translation. In Cyanidium caldarium (Red alga), this protein is Large ribosomal subunit protein bL12c.